Consider the following 224-residue polypeptide: Claudin-19 (224 aa).

The Cytoplasmic portion of the chain corresponds to Met-1–Gln-7. Residues Leu-8 to Pro-28 traverse the membrane as a helical segment. Topologically, residues Gln-29 to Arg-81 are extracellular. Cys-54 and Cys-64 form a disulfide bridge. Residues Ala-82–Met-102 form a helical membrane-spanning segment. At Lys-103–Arg-117 the chain is on the cytoplasmic side. A helical membrane pass occupies residues Val-118–Ser-138. Topologically, residues Trp-139–Glu-160 are extracellular. A helical membrane pass occupies residues Phe-161 to Phe-181. Topologically, residues Leu-182–Val-224 are cytoplasmic.

This sequence belongs to the claudin family. In terms of assembly, can form homo- and heteropolymeric tight junction strands. Interacts with other claudins including CLDN3, CLDN10, CLDN16 and CLDN18 with highest affinity for CLDN16. Interacts (via PDZ-binding motif TRV) with TJP1 (via PDZ domain). As to quaternary structure, (Microbial infection) Interacts (via both extracellular domains) with Clostridium perfringens enterotoxin CPE; the interaction disrupts claudin assembly in tight junctions. As to expression, expressed in the corticomedullary axis of the TAL, specifically in the cortex and the outer stripe of outer medulla (OSOM) zone (at protein level). Expressed in peripheral nervous system, in Schwan cells (at protein level).

Its subcellular location is the cell junction. It is found in the tight junction. The protein localises to the cell membrane. The enzyme catalyses Mg(2+)(in) = Mg(2+)(out). It catalyses the reaction Ca(2+)(in) = Ca(2+)(out). The catalysed reaction is Na(+)(in) = Na(+)(out). It carries out the reaction K(+)(in) = K(+)(out). The enzyme catalyses Rb(+)(in) = Rb(+)(out). It catalyses the reaction Cs(+)(in) = Cs(+)(out). The catalysed reaction is Li(+)(in) = Li(+)(out). Functionally, forms paracellular channels: coassembles with CLDN16 into tight junction strands with cation-selective channels through the strands, conveying epithelial permeability in a process known as paracellular tight junction permeability. Involved in the maintenance of ion gradients along the nephron. In the thick ascending limb (TAL) of Henle's loop, facilitates sodium paracellular permeability from the interstitial compartment to the lumen, contributing to the lumen-positive transepithelial potential that drives paracellular magnesium and calcium reabsorption. Forms paracellular barriers on its own. In the peripheral nervous system, represents a major constituent of the tight junctions in Schwann cells and contributes to electrical sealing. During retinal neurogenesis, may regulate the barrier properties of tight junctions in retinal pigment epithelium, required for proper retinal tissue differentiation and vision. The protein is Claudin-19 of Mus musculus (Mouse).